Consider the following 103-residue polypeptide: N(4)-acetylcytidine amidohydrolase (103 aa).

Positions 6 to 100 (ITFFQRFQND…NQMQFYVIDF (95 aa)) constitute an ASCH domain. The active-site Proton acceptor is K21. Residue T24 is the Nucleophile of the active site. E74 (proton donor) is an active-site residue.

It belongs to the N(4)-acetylcytidine amidohydrolase family.

The enzyme catalyses N(4)-acetylcytidine + H2O = cytidine + acetate + H(+). It carries out the reaction N(4)-acetyl-2'-deoxycytidine + H2O = 2'-deoxycytidine + acetate + H(+). The catalysed reaction is N(4)-acetylcytosine + H2O = cytosine + acetate + H(+). Its function is as follows. Catalyzes the hydrolysis of N(4)-acetylcytidine (ac4C). This chain is N(4)-acetylcytidine amidohydrolase (yqfB), found in Salmonella arizonae (strain ATCC BAA-731 / CDC346-86 / RSK2980).